The primary structure comprises 189 residues: Probable nicotinate-nucleotide adenylyltransferase (189 aa).

Belongs to the NadD family.

The enzyme catalyses nicotinate beta-D-ribonucleotide + ATP + H(+) = deamido-NAD(+) + diphosphate. It participates in cofactor biosynthesis; NAD(+) biosynthesis; deamido-NAD(+) from nicotinate D-ribonucleotide: step 1/1. Its function is as follows. Catalyzes the reversible adenylation of nicotinate mononucleotide (NaMN) to nicotinic acid adenine dinucleotide (NaAD). The protein is Probable nicotinate-nucleotide adenylyltransferase of Caulobacter sp. (strain K31).